We begin with the raw amino-acid sequence, 138 residues long: Basic phospholipase A2 homolog TM-N49 (138 aa).

A signal peptide spans 1-16 (MRTLWIMAVLLLGVEG). Intrachain disulfides connect C42–C131, C44–C60, C59–C111, C65–C138, C66–C104, C73–C97, and C91–C102.

The protein belongs to the phospholipase A2 family. Group II subfamily. N49 sub-subfamily. Homodimer; non-covalently linked. Expressed by the venom gland.

The protein localises to the secreted. Its function is as follows. Snake venom phospholipase A2 (PLA2) that exhibits potent myotoxic activity causing inflammatory cell infiltration, severe myoedema, myonecrosis and myolysis in the gastrocnemius muscles of BALB/c mice. In Protobothrops mucrosquamatus (Taiwan habu), this protein is Basic phospholipase A2 homolog TM-N49.